The primary structure comprises 297 residues: Polyketide transferase ATR5 (297 aa).

Positions 49–272 (DVAVWFQKRG…FVLAENKGHM (224 aa)) are abhydrolase domain.

It belongs to the polyketide transferase af380 family.

It functions in the pathway mycotoxin biosynthesis. Polyketide transferase; part of the core atranone cluster (CAC) which products are predicted to catalyze most or all steps of atranone synthesis, starting from geranylgeranyl pyrophosphate (GGPP). The initial cyclization of GGPP to dolabellane is probably performed by the terpene cyclase ATR13. The Baeyer-Villiger oxidation near the end of the atranone synthesis, which converts atranones D and E to atranones F and G is predicted to be catalyzed by the monooxygenase ATR8. Of the CAC's other predicted gene products, the reducing PKS ATR6 might synthesize a polyketide chain. This polyketide is probably transferred onto the atranone backbone by the polyketide transferase ATR5. Other predicted CAC products include 4 oxygenases (ATR2, ATR3, ATR4, and ATR14), 3 short-chain reductases (ATR7, ATR9, and ATR10), and a methyltransferase (ATR12). These may all be involved in the various steps of atranone biosynthesis, although their specific roles must await experimental determination. This is Polyketide transferase ATR5 from Stachybotrys chlorohalonatus (strain IBT 40285).